The chain runs to 325 residues: GTPase Era (325 aa).

The Era-type G domain maps to 30–198 (HCGFVAIVGR…KKHVRDHLPK (169 aa)). Residues 38-45 (GRPNVGKS) form a G1 region. 38-45 (GRPNVGKS) lines the GTP pocket. The segment at 64-68 (QTTRH) is G2. The tract at residues 85–88 (DTPG) is G3. Residues 85–89 (DTPGL) and 147–150 (NKVD) each bind GTP. Positions 147–150 (NKVD) are G4. Residues 177–179 (ISA) form a G5 region. Positions 221–307 (VREKLMRFTG…YLETWVKVKS (87 aa)) constitute a KH type-2 domain.

It belongs to the TRAFAC class TrmE-Era-EngA-EngB-Septin-like GTPase superfamily. Era GTPase family. In terms of assembly, monomer.

The protein localises to the cytoplasm. It is found in the cell inner membrane. In terms of biological role, an essential GTPase that binds both GDP and GTP, with rapid nucleotide exchange. Plays a role in 16S rRNA processing and 30S ribosomal subunit biogenesis and possibly also in cell cycle regulation and energy metabolism. The protein is GTPase Era of Vibrio cholerae serotype O1 (strain ATCC 39315 / El Tor Inaba N16961).